A 329-amino-acid polypeptide reads, in one-letter code: Probable fructokinase-2 (329 aa).

Belongs to the carbohydrate kinase PfkB family.

It carries out the reaction D-fructose + ATP = D-fructose 6-phosphate + ADP + H(+). The protein operates within glycan biosynthesis; starch biosynthesis. Its function is as follows. May play an important role in maintaining the flux of carbon towards starch formation. The sequence is that of Probable fructokinase-2 from Arabidopsis thaliana (Mouse-ear cress).